Here is a 76-residue protein sequence, read N- to C-terminus: Acyl carrier protein (76 aa).

Residues 1–74 enclose the Carrier domain; sequence MEERIKEIIA…DVINYIKEKK (74 aa). Serine 34 is modified (O-(pantetheine 4'-phosphoryl)serine).

The protein belongs to the acyl carrier protein (ACP) family. In terms of processing, 4'-phosphopantetheine is transferred from CoA to a specific serine of apo-ACP by AcpS. This modification is essential for activity because fatty acids are bound in thioester linkage to the sulfhydryl of the prosthetic group.

The protein resides in the cytoplasm. It participates in lipid metabolism; fatty acid biosynthesis. In terms of biological role, carrier of the growing fatty acid chain in fatty acid biosynthesis. The chain is Acyl carrier protein from Persephonella marina (strain DSM 14350 / EX-H1).